We begin with the raw amino-acid sequence, 668 residues long: Myb-like protein W (668 aa).

Disordered regions lie at residues 57 to 124 (LDQF…NESV), 246 to 357 (EKEK…EEEV), 403 to 432 (KPKSKLKSSSKPGIPTSPITMKTNPHTDKG), 497 to 546 (YTNT…NKER), 561 to 583 (SMGRFSAKPPPIKTTTTTTTTTS), and 631 to 668 (QCEERKKKEDRDVDEDGEDDYYFGGDNSKNGDDDDEII). Low complexity predominate over residues 69–121 (NNNNNNNSNNNNNNNNNNNNNNNNNNNNNNNNNNNNNNNNNNYNNYNNNNNNN). Positions 246 to 268 (EKEKRKKEREEREEREKQEKQEQ) are enriched in basic and acidic residues. A compositionally biased stretch (low complexity) spans 293–307 (NNKDNNHNGYYYYYD). The span at 308–318 (NDNDNYNDGDD) shows a compositional bias: acidic residues. The segment covering 319–335 (EKEKEKEKEKEKEKENE) has biased composition (basic and acidic residues). One can recognise a Myb-like domain in the interval 344-398 (TSMVNSEEWTEEEVNKMNEIRGKLSTADYNYWDKVSAHVKSKTAEQCQRKYNSRF). The span at 501–542 (NNNNNNNNNNNNNNNNNNNNNNNNNNNNNNNNNNNNNNNNNN) shows a compositional bias: low complexity. The segment covering 632–641 (CEERKKKEDR) has biased composition (basic and acidic residues). A compositionally biased stretch (acidic residues) spans 642-651 (DVDEDGEDDY).

The polypeptide is Myb-like protein W (mybW) (Dictyostelium discoideum (Social amoeba)).